A 745-amino-acid chain; its full sequence is F-box only protein 30 (745 aa).

The segment at 48–109 (EHRLLCPFER…SYADRKSYEN (62 aa)) adopts a TRAF-type zinc-finger fold. Disordered regions lie at residues 211–231 (NTSV…LEDQ) and 305–324 (GDSK…SDGT). Residues 222–231 (QNARESLEDQ) are compositionally biased toward basic and acidic residues. A compositionally biased stretch (polar residues) spans 305–314 (GDSKQSNLTN). Positions 610–658 (NDHLSSLPFEVLQHIAGFLDGFSLCQLSCVSKLMRDVCGSLLQSRGMVI) constitute an F-box domain.

In terms of assembly, part of a SCF (SKP1-cullin-F-box) protein ligase complex. Interacts with SKP1, CUL1 and RBX1/ROC1. Post-translationally, auto-ubiquitinated. In terms of processing, may be neddylated. Neddylation may be required for E3 ligase activity.

It functions in the pathway protein modification; protein ubiquitination. Substrate-recognition component of the SCF (SKP1-CUL1-F-box protein)-type E3 ubiquitin ligase complex. Required for muscle atrophy following denervation. This chain is F-box only protein 30 (FBXO30), found in Homo sapiens (Human).